The sequence spans 547 residues: Phosphomethylpyrimidine synthase (547 aa).

Substrate is bound by residues asparagine 146, methionine 175, tyrosine 204, histidine 240, 260-262, 301-304, and glutamate 340; these read SRG and DGLR. Residue histidine 344 participates in Zn(2+) binding. Residue tyrosine 367 participates in substrate binding. Histidine 408 contacts Zn(2+). Residues cysteine 488, cysteine 491, and cysteine 496 each contribute to the [4Fe-4S] cluster site.

Belongs to the ThiC family. [4Fe-4S] cluster serves as cofactor.

The enzyme catalyses 5-amino-1-(5-phospho-beta-D-ribosyl)imidazole + S-adenosyl-L-methionine = 4-amino-2-methyl-5-(phosphooxymethyl)pyrimidine + CO + 5'-deoxyadenosine + formate + L-methionine + 3 H(+). The protein operates within cofactor biosynthesis; thiamine diphosphate biosynthesis. Its function is as follows. Catalyzes the synthesis of the hydroxymethylpyrimidine phosphate (HMP-P) moiety of thiamine from aminoimidazole ribotide (AIR) in a radical S-adenosyl-L-methionine (SAM)-dependent reaction. The protein is Phosphomethylpyrimidine synthase of Mycobacterium bovis (strain ATCC BAA-935 / AF2122/97).